A 360-amino-acid polypeptide reads, in one-letter code: Methionine import ATP-binding protein MetN (360 aa).

Positions 1–22 (MSHTASTPTPEEYSAQQPSTQG) are disordered. One can recognise an ABC transporter domain in the interval 25–265 (VEFRGITKVF…PQTQVAQKFV (241 aa)). 62–69 (GYSGAGKS) contributes to the ATP binding site.

Belongs to the ABC transporter superfamily. Methionine importer (TC 3.A.1.24) family. The complex is composed of two ATP-binding proteins (MetN), two transmembrane proteins (MetI) and a solute-binding protein (MetQ).

It is found in the cell membrane. It catalyses the reaction L-methionine(out) + ATP + H2O = L-methionine(in) + ADP + phosphate + H(+). It carries out the reaction D-methionine(out) + ATP + H2O = D-methionine(in) + ADP + phosphate + H(+). Part of the ABC transporter complex MetNIQ involved in methionine import. Responsible for energy coupling to the transport system. This Corynebacterium glutamicum (strain ATCC 13032 / DSM 20300 / JCM 1318 / BCRC 11384 / CCUG 27702 / LMG 3730 / NBRC 12168 / NCIMB 10025 / NRRL B-2784 / 534) protein is Methionine import ATP-binding protein MetN.